The primary structure comprises 192 residues: Thioredoxin-like 3-2, chloroplastic (192 aa).

The N-terminal 55 residues, 1–55, are a transit peptide targeting the chloroplast; sequence MSEIVNLSSSLRSLNPKISPLVPPYRQTSSSFSRPRNFKYHSFTDKICLAAERIR. The region spanning 66–191 is the Thioredoxin domain; that stretch reads LQELDDSPVS…VREMIENDSI (126 aa). Active-site nucleophile residues include Cys-110 and Cys-113. Cys-110 and Cys-113 are oxidised to a cystine.

It belongs to the thioredoxin family.

Its subcellular location is the plastid. The protein localises to the chloroplast stroma. Functionally, probable thiol-disulfide oxidoreductase that may participate in various redox reactions. The polypeptide is Thioredoxin-like 3-2, chloroplastic (WCRKC2) (Arabidopsis thaliana (Mouse-ear cress)).